Here is a 300-residue protein sequence, read N- to C-terminus: Putative S-adenosyl-L-methionine-dependent methyltransferase MMAR_1058 (300 aa).

S-adenosyl-L-methionine is bound by residues D127 and 156-157 (DL).

It belongs to the UPF0677 family.

Its function is as follows. Exhibits S-adenosyl-L-methionine-dependent methyltransferase activity. The sequence is that of Putative S-adenosyl-L-methionine-dependent methyltransferase MMAR_1058 from Mycobacterium marinum (strain ATCC BAA-535 / M).